Here is a 94-residue protein sequence, read N- to C-terminus: Dynein light chain, cytoplasmic (94 aa).

The protein belongs to the dynein light chain family. In terms of assembly, homodimer. Cytoplasmic dynein consists of two catalytic heavy chains (HCs) and a number of non-catalytic subunits which present intermediate chains (ICs), light intermediate chains (LICs) and light chains (LCs). Component of the nuclear pore complex (NPC). The nuclear pore complex constitutes the exclusive means of nucleocytoplasmic transport. NPCs allow the passive diffusion of ions and small molecules and the active, nuclear transport receptor-mediated bidirectional transport of macromolecules such as proteins, RNAs, ribonucleoparticles (RNPs), and ribosomal subunits across the nuclear envelope. Due to its 8-fold rotational symmetry, all subunits are present with 8 copies or multiples thereof.

The protein localises to the cytoplasm. It is found in the cytoskeleton. Its subcellular location is the nucleus. It localises to the nuclear pore complex. In terms of biological role, acts as one of several non-catalytic accessory components of the cytoplasmic dynein complex that are thought to be involved in linking dynein to cargos and to adapter proteins that regulate dynein function. Cytoplasmic dynein 1 acts as a motor for the intracellular retrograde motility of vesicles and organelles along microtubules. May play a role in changing or maintaining the spatial distribution of cytoskeletal structures. Also a component of the nuclear pore complex. This chain is Dynein light chain, cytoplasmic (nudG), found in Emericella nidulans (strain FGSC A4 / ATCC 38163 / CBS 112.46 / NRRL 194 / M139) (Aspergillus nidulans).